Reading from the N-terminus, the 225-residue chain is NAD(P)H-quinone oxidoreductase subunit K, chloroplastic (225 aa).

The [4Fe-4S] cluster site is built by C43, C44, C108, and C139.

Belongs to the complex I 20 kDa subunit family. In terms of assembly, NDH is composed of at least 16 different subunits, 5 of which are encoded in the nucleus. [4Fe-4S] cluster is required as a cofactor.

The protein resides in the plastid. Its subcellular location is the chloroplast thylakoid membrane. It carries out the reaction a plastoquinone + NADH + (n+1) H(+)(in) = a plastoquinol + NAD(+) + n H(+)(out). The catalysed reaction is a plastoquinone + NADPH + (n+1) H(+)(in) = a plastoquinol + NADP(+) + n H(+)(out). NDH shuttles electrons from NAD(P)H:plastoquinone, via FMN and iron-sulfur (Fe-S) centers, to quinones in the photosynthetic chain and possibly in a chloroplast respiratory chain. The immediate electron acceptor for the enzyme in this species is believed to be plastoquinone. Couples the redox reaction to proton translocation, and thus conserves the redox energy in a proton gradient. The chain is NAD(P)H-quinone oxidoreductase subunit K, chloroplastic from Carica papaya (Papaya).